Here is a 287-residue protein sequence, read N- to C-terminus: Ribonuclease HII (287 aa).

Positions 61–287 (ALQIGVDEAG…FAPVRKALES (227 aa)) constitute an RNase H type-2 domain. A divalent metal cation-binding residues include Asp67, Glu68, and Asp186.

Belongs to the RNase HII family. It depends on Mn(2+) as a cofactor. Mg(2+) serves as cofactor.

The protein localises to the cytoplasm. It carries out the reaction Endonucleolytic cleavage to 5'-phosphomonoester.. Functionally, endonuclease that specifically degrades the RNA of RNA-DNA hybrids. In Psychrobacter arcticus (strain DSM 17307 / VKM B-2377 / 273-4), this protein is Ribonuclease HII.